The sequence spans 271 residues: MAELDDFFAKKDKKKSKNKTKFVTADEMVKNLEDGTKREVVKPKKPEVAAGGVAVVGENENSGTKVPESAPPVEEEWKEFEEEQRKDYSGLKIGQLSTISSARSRTAQESSESQAARVPSAPDGGNYNEDDEDSNGYDNADVNKERVGHGPWKKVVPAEEVMQIPVPVEVEKHSSKTYVSPALRYSQQAGSGLGGGPTGGALRPRRAAPDITNTEFFPTLSAARPEEQRKKKNEPAFEEVRHGSRFQRVQESTAAPVAASNRFQSLDDEAS.

Residues 37–47 are compositionally biased toward basic and acidic residues; the sequence is KREVVKPKKPE. Disordered regions lie at residues 37-151 and 186-271; these read KREV…GHGP and SQQA…DEAS. The span at 48–61 shows a compositional bias: low complexity; the sequence is VAAGGVAVVGENEN. The span at 73–82 shows a compositional bias: acidic residues; that stretch reads VEEEWKEFEE. Positions 95-114 are enriched in polar residues; sequence QLSTISSARSRTAQESSESQ. Ser-134 is subject to Phosphoserine. The segment covering 224–242 has biased composition (basic and acidic residues); that stretch reads RPEEQRKKKNEPAFEEVRH.

It belongs to the CDV3 family.

The chain is Protein CDV3 homolog from Drosophila melanogaster (Fruit fly).